The primary structure comprises 342 residues: Anthranilate phosphoribosyltransferase (342 aa).

5-phospho-alpha-D-ribose 1-diphosphate-binding positions include G83, 86 to 87, T91, 93 to 96, 111 to 119, and S123; these read GD, NIST, and KHGGRSVSS. G83 serves as a coordination point for anthranilate. Residue S95 coordinates Mg(2+). R169 provides a ligand contact to anthranilate. The Mg(2+) site is built by D228 and E229.

Belongs to the anthranilate phosphoribosyltransferase family. In terms of assembly, homodimer. Requires Mg(2+) as cofactor.

The catalysed reaction is N-(5-phospho-beta-D-ribosyl)anthranilate + diphosphate = 5-phospho-alpha-D-ribose 1-diphosphate + anthranilate. It functions in the pathway amino-acid biosynthesis; L-tryptophan biosynthesis; L-tryptophan from chorismate: step 2/5. Its function is as follows. Catalyzes the transfer of the phosphoribosyl group of 5-phosphorylribose-1-pyrophosphate (PRPP) to anthranilate to yield N-(5'-phosphoribosyl)-anthranilate (PRA). The sequence is that of Anthranilate phosphoribosyltransferase from Chromobacterium violaceum (strain ATCC 12472 / DSM 30191 / JCM 1249 / CCUG 213 / NBRC 12614 / NCIMB 9131 / NCTC 9757 / MK).